Consider the following 353-residue polypeptide: S-adenosylmethionine:tRNA ribosyltransferase-isomerase (353 aa).

This sequence belongs to the QueA family. As to quaternary structure, monomer.

It localises to the cytoplasm. It catalyses the reaction 7-aminomethyl-7-carbaguanosine(34) in tRNA + S-adenosyl-L-methionine = epoxyqueuosine(34) in tRNA + adenine + L-methionine + 2 H(+). It functions in the pathway tRNA modification; tRNA-queuosine biosynthesis. In terms of biological role, transfers and isomerizes the ribose moiety from AdoMet to the 7-aminomethyl group of 7-deazaguanine (preQ1-tRNA) to give epoxyqueuosine (oQ-tRNA). The sequence is that of S-adenosylmethionine:tRNA ribosyltransferase-isomerase from Maricaulis maris (strain MCS10) (Caulobacter maris).